The sequence spans 277 residues: Large ribosomal subunit protein uL2 (277 aa).

Residues valine 227–lysine 277 form a disordered region. The segment covering lysine 266–lysine 277 has biased composition (basic and acidic residues).

This sequence belongs to the universal ribosomal protein uL2 family. In terms of assembly, part of the 50S ribosomal subunit. Forms a bridge to the 30S subunit in the 70S ribosome.

One of the primary rRNA binding proteins. Required for association of the 30S and 50S subunits to form the 70S ribosome, for tRNA binding and peptide bond formation. It has been suggested to have peptidyltransferase activity; this is somewhat controversial. Makes several contacts with the 16S rRNA in the 70S ribosome. The chain is Large ribosomal subunit protein uL2 from Magnetococcus marinus (strain ATCC BAA-1437 / JCM 17883 / MC-1).